A 454-amino-acid polypeptide reads, in one-letter code: Glutaredoxin domain-containing cysteine-rich protein CG31559 (454 aa).

Disordered stretches follow at residues 30–88 (ETAD…QRQK) and 217–239 (RSAR…GSDS). Polar residues predominate over residues 33–45 (DSGNGSDLESTGL). Residues 58 to 69 (SSLGSDSMHGSS) are compositionally biased toward low complexity. Residues 70-84 (TEYVRQSASQPSGQR) are compositionally biased toward polar residues. The segment covering 217–227 (RSARSGDEADH) has biased composition (basic and acidic residues). The Glutaredoxin domain occupies 295–400 (NAKNFKEKDL…QLLKPYKSMA (106 aa)).

This sequence belongs to the GRXCR1 family.

The chain is Glutaredoxin domain-containing cysteine-rich protein CG31559 from Drosophila melanogaster (Fruit fly).